Here is a 497-residue protein sequence, read N- to C-terminus: Indoleacetaldoxime dehydratase (497 aa).

Residues 2–20 (EMILSISLCLTTLITLLLL) form a helical membrane-spanning segment. Cys439 is a binding site for heme.

It belongs to the cytochrome P450 family.

The protein localises to the membrane. It catalyses the reaction (E)-(indol-3-yl)acetaldehyde oxime = (indol-3-yl)acetonitrile + H2O. In terms of biological role, involved in the biosynthesis of the indole-derived phytoalexin camalexin. Catalyzes the conversion of indole-3-acetaldoxime to indole-3-acetonitrile. Required for resistance to A.brassicicola and B.cinerea. This Arabidopsis thaliana (Mouse-ear cress) protein is Indoleacetaldoxime dehydratase (CYP71A13).